The chain runs to 401 residues: Argininosuccinate synthase (401 aa).

9–17 (AYSGGLDTS) serves as a coordination point for ATP. Tyr-88 provides a ligand contact to L-citrulline. Gly-118 is an ATP binding site. Residues Thr-120, Asn-124, and Asp-125 each coordinate L-aspartate. Asn-124 is an L-citrulline binding site. 5 residues coordinate L-citrulline: Arg-128, Ser-177, Ser-186, Glu-262, and Tyr-274.

The protein belongs to the argininosuccinate synthase family. Type 1 subfamily. In terms of assembly, homotetramer.

It localises to the cytoplasm. The catalysed reaction is L-citrulline + L-aspartate + ATP = 2-(N(omega)-L-arginino)succinate + AMP + diphosphate + H(+). It participates in amino-acid biosynthesis; L-arginine biosynthesis; L-arginine from L-ornithine and carbamoyl phosphate: step 2/3. This Chlorobaculum tepidum (strain ATCC 49652 / DSM 12025 / NBRC 103806 / TLS) (Chlorobium tepidum) protein is Argininosuccinate synthase.